Here is an 846-residue protein sequence, read N- to C-terminus: Selenocysteine insertion sequence-binding protein 2 (846 aa).

2 stretches are compositionally biased toward basic and acidic residues: residues 151–165 (RRAW…RRAD) and 206–215 (PEFEFSRLDF). Disordered regions lie at residues 151 to 246 (RRAW…SNMS), 266 to 288 (TDHT…TREL), 321 to 440 (TTSS…VPVQ), 448 to 467 (AALE…RPVV), and 475 to 613 (VLSK…DSAT). At Ser-220 the chain carries Phosphoserine. 3 stretches are compositionally biased toward polar residues: residues 220-232 (SPKN…TQKQ), 272-288 (AVTN…TREL), and 321-342 (TTSS…SDPS). Positions 370–380 (KKNKKKKEKSK) match the Nuclear localization signal motif. Residues 417 to 428 (KLQSKQQAQNDF) are compositionally biased toward polar residues. The span at 527-536 (ILKERQERMQ) shows a compositional bias: basic and acidic residues. Residues 542-551 (SAVSPTVASD) show a composition bias toward polar residues. The RNA-binding stretch occupies residues 666 to 687 (LVLGLREVLKHLKLRKLKCIII). Residues 774–804 (RQEQAGEPGPQTPPSPPMQDPIQSTDEGTLA) are disordered. The span at 783 to 792 (PQTPPSPPMQ) shows a compositional bias: pro residues.

In terms of tissue distribution, ubiquitous.

The protein localises to the cytoplasm. Its subcellular location is the nucleus. Functionally, mRNA-binding protein that binds to the SECIS (selenocysteine insertion sequence) element present in the 3'-UTR of mRNAs encoding selenoproteins and facilitates the incorporation of the rare amino acid selenocysteine. Insertion of selenocysteine at UGA codons is mediated by SECISBP2 and EEFSEC: SECISBP2 (1) specifically binds the SECIS sequence once the 80S ribosome encounters an in-frame UGA codon and (2) contacts the RPS27A/eS31 of the 40S ribosome before ribosome stalling. (3) GTP-bound EEFSEC then delivers selenocysteinyl-tRNA(Sec) to the 80S ribosome and adopts a preaccommodated state conformation. (4) After GTP hydrolysis, EEFSEC dissociates from the assembly, selenocysteinyl-tRNA(Sec) accommodates, and peptide bond synthesis and selenoprotein elongation occur. This Rattus norvegicus (Rat) protein is Selenocysteine insertion sequence-binding protein 2 (Secisbp2).